A 499-amino-acid chain; its full sequence is Aspartyl/glutamyl-tRNA(Asn/Gln) amidotransferase subunit B (499 aa).

This sequence belongs to the GatB/GatE family. GatB subfamily. Heterotrimer of A, B and C subunits.

It carries out the reaction L-glutamyl-tRNA(Gln) + L-glutamine + ATP + H2O = L-glutaminyl-tRNA(Gln) + L-glutamate + ADP + phosphate + H(+). The catalysed reaction is L-aspartyl-tRNA(Asn) + L-glutamine + ATP + H2O = L-asparaginyl-tRNA(Asn) + L-glutamate + ADP + phosphate + 2 H(+). Allows the formation of correctly charged Asn-tRNA(Asn) or Gln-tRNA(Gln) through the transamidation of misacylated Asp-tRNA(Asn) or Glu-tRNA(Gln) in organisms which lack either or both of asparaginyl-tRNA or glutaminyl-tRNA synthetases. The reaction takes place in the presence of glutamine and ATP through an activated phospho-Asp-tRNA(Asn) or phospho-Glu-tRNA(Gln). This chain is Aspartyl/glutamyl-tRNA(Asn/Gln) amidotransferase subunit B, found in Bartonella quintana (strain Toulouse) (Rochalimaea quintana).